The sequence spans 43 residues: Protein PsbN (43 aa).

A helical transmembrane segment spans residues 7–27 (VAIFISCLLVSFTGYALYTAF).

The protein belongs to the PsbN family.

It is found in the plastid. The protein localises to the chloroplast thylakoid membrane. Functionally, may play a role in photosystem I and II biogenesis. The sequence is that of Protein PsbN from Huperzia lucidula (Shining clubmoss).